Here is a 1016-residue protein sequence, read N- to C-terminus: KN motif and ankyrin repeat domain-containing protein 4 (1016 aa).

Disordered regions lie at residues 1-26, 70-91, 235-259, 401-485, 506-563, and 622-755; these read MEKI…YPYS, PRNF…QQNW, AEPE…AVQS, LSQE…LPRG, EEGS…SPQD, and AQAP…VSHL. 2 stretches are compositionally biased toward polar residues: residues 70-80 and 246-258; these read PRNFSLPNSGD and SHLS…SAVQ. Residues 346 to 409 are a coiled coil; it reads SSLKNQVLAL…KLSQERASEA (64 aa). 2 stretches are compositionally biased toward basic and acidic residues: residues 401–414 and 445–454; these read LSQE…DRTD and PECRAPRAEK. Over residues 460-469 the composition is skewed to polar residues; sequence VQNNHKQSYP. Positions 632 to 650 are enriched in pro residues; that stretch reads TPAPPPSTPPPPPPPPPEI. Thr-639 bears the Phosphothreonine mark. A compositionally biased stretch (acidic residues) spans 695 to 708; that stretch reads TSGEDSSPEDLSDS. Composition is skewed to basic and acidic residues over residues 709–727 and 745–755; these read ETEK…DLHP and TSDRGEEVSHL. ANK repeat units follow at residues 838–868, 877–905, 910–939, 943–973, and 977–1007; these read SGNT…NVDH, VMIT…NVNI, GGQT…DVNL, DGSS…NSSL, and AGRT…PGRS.

Its subcellular location is the cytoplasm. May be involved in the control of cytoskeleton formation by regulating actin polymerization. The chain is KN motif and ankyrin repeat domain-containing protein 4 (Kank4) from Mus musculus (Mouse).